Reading from the N-terminus, the 119-residue chain is Small ribosomal subunit protein uS13m (119 aa).

The protein belongs to the universal ribosomal protein uS13 family. As to quaternary structure, component of the mitochondrial small ribosomal subunit (mt-SSU). Mature N.crassa 74S mitochondrial ribosomes consist of a small (37S) and a large (54S) subunit. The 37S small subunit contains a 16S ribosomal RNA (16S mt-rRNA) and 32 different proteins. The 54S large subunit contains a 23S rRNA (23S mt-rRNA) and 42 different proteins.

The protein localises to the mitochondrion. Its function is as follows. Component of the mitochondrial ribosome (mitoribosome), a dedicated translation machinery responsible for the synthesis of mitochondrial genome-encoded proteins, including at least some of the essential transmembrane subunits of the mitochondrial respiratory chain. The mitoribosomes are attached to the mitochondrial inner membrane and translation products are cotranslationally integrated into the membrane. The polypeptide is Small ribosomal subunit protein uS13m (sws2) (Neurospora crassa (strain ATCC 24698 / 74-OR23-1A / CBS 708.71 / DSM 1257 / FGSC 987)).